The chain runs to 148 residues: MTPGERSLIQRALKTLDRHLHEPGVAFTSTRAAREWLILNMAGLEREEFRVLYLNNQNQLIAGETLFTGTINRTEVHPREVIKRALYHNAAAVVLAHNHPSGEVTPSKADRLITERLVQALGLVDIRVPDHLIVGGNQVFSFAEHGLL.

The 123-residue stretch at 26–148 folds into the MPN domain; that stretch reads AFTSTRAARE…VFSFAEHGLL (123 aa). Zn(2+) is bound by residues His97, His99, and Asp110. Positions 97 to 110 match the JAMM motif motif; that stretch reads HNHPSGEVTPSKAD.

Belongs to the UPF0758 family.

The polypeptide is UPF0758 protein YeeS (yeeS) (Escherichia coli (strain K12)).